A 163-amino-acid polypeptide reads, in one-letter code: MRRILSVLLENESGALSRVVGLFSQRAFNIESLTVAPTDDPTLSRMTIEAVGDAQALEQIEKQLHKLVDVFKVVNLSEQEHIEREIVLAKVRAVGSSRDEIKRLADIFRGQIVDVTPKSYTIQLSGTNDKVDAFISALKEETTLLEIVRSGLISVSRGEKNIL.

One can recognise an ACT domain in the interval 4 to 79 (ILSVLLENES…VFKVVNLSEQ (76 aa)).

This sequence belongs to the acetolactate synthase small subunit family. In terms of assembly, dimer of large and small chains.

The enzyme catalyses 2 pyruvate + H(+) = (2S)-2-acetolactate + CO2. It functions in the pathway amino-acid biosynthesis; L-isoleucine biosynthesis; L-isoleucine from 2-oxobutanoate: step 1/4. Its pathway is amino-acid biosynthesis; L-valine biosynthesis; L-valine from pyruvate: step 1/4. The polypeptide is Acetolactate synthase small subunit (ilvH) (Haemophilus influenzae (strain ATCC 51907 / DSM 11121 / KW20 / Rd)).